Reading from the N-terminus, the 408-residue chain is MFGGKSHILRGSVSLALIVLILLVIILLVSEENPLRDSLFEVKRQFSSSSSSSSSVCNFAKGKWVEDRKRPLYSGFECKQWLSSMWSCRIMGRPDFSFEGYRWQPEGCNMPQFDRFTFLTRMQNKTIAFIGDSLGRQQFQSLMCMASGGEDSPEVQNVGWEYGLVKAKGALRPDGWAYRFPTTNTTILYYWSASLSDLVPMNNTDPPSLTAMHLDRPPAFMRNYLHRFDVLVLNTGHHWNRGKIEGNHWVMHVNGTQVEGEYLKDIRNAKDFTIHSVAKWLDAQLPLHPRLKAFFRTISPRHFKNGDWNTGGNCNNTVPLSRGSEITGDDGSIDATVESAVNGTRIKILDITALSELRDEAHISGSKLKPRKPKKASNVTSTPTINDCLHWCLPGIPDTWNELFIAQI.

The chain crosses the membrane as a helical; Signal-anchor for type II membrane protein span at residues 11–31 (GSVSLALIVLILLVIILLVSE). The GDS motif motif lies at 131 to 133 (GDS). A DCXHWCLPGXXDXWN motif motif is present at residues 387–401 (DCLHWCLPGIPDTWN).

This sequence belongs to the PC-esterase family. TBL subfamily.

Its subcellular location is the membrane. Functionally, may act as a bridging protein that binds pectin and other cell wall polysaccharides. Probably involved in maintaining esterification of pectins. May be involved in the specific O-acetylation of cell wall polymers. The protein is Protein trichome birefringence-like 14 (TBL14) of Arabidopsis thaliana (Mouse-ear cress).